We begin with the raw amino-acid sequence, 442 residues long: MGITVLKNEGLDFHAKISTPLSEIDDDMQKELLDLTKKVKIAGFRAGKVPVSIVKKKYGTSIRNDIIERRINHWVNHVIKEHNLNIIGRPKIEELQNEPDKALEFTVKIEILPKITIPDLKKISLDRPKLEVKPKDVEEQLEKLATLTKSYTKESKVTIKDGDQVTIDAIGYIKDKTFDGGKLNDLKVVIGSNTLIPGFEKQLIGSKTGSEIDVNVTFPENYHAKDLAGKDARFVVQIKAVHTSEPTLIDDEFAKKFQSNNLEELRTHFAKQIENESEEAINTIMKMNLFDKLEKLLDFDVPESLLEQEKNILKSETDKDESLLKDKSSKEITEYYNKLALRRVRIGLLLAEYAKSKNLQLEPDDFKKVIIQQARNFPGQENMIFDFYKNNPKAIEALKGTALEDKVVQYIFNNEIKLKEKKYTKEELEKYLEEEEQRITLI.

Residues 162-247 (GDQVTIDAIG…IKAVHTSEPT (86 aa)) enclose the PPIase FKBP-type domain.

Belongs to the FKBP-type PPIase family. Tig subfamily.

It is found in the cytoplasm. The enzyme catalyses [protein]-peptidylproline (omega=180) = [protein]-peptidylproline (omega=0). Its function is as follows. Involved in protein export. Acts as a chaperone by maintaining the newly synthesized protein in an open conformation. Functions as a peptidyl-prolyl cis-trans isomerase. This chain is Trigger factor, found in Rickettsia canadensis (strain McKiel).